Here is a 698-residue protein sequence, read N- to C-terminus: Cytochrome c oxidase subunit 1 (698 aa).

The chain crosses the membrane as a helical span at residues 65 to 85 (INYLYFSMVTGLSGAALATMI). Position 88 (glutamate 88) interacts with Ca(2+). Residue histidine 111 coordinates Fe(II)-heme a. 8 helical membrane passes run 113–133 (LIMV…NFLI), 147–167 (LNSI…KIGF), 304–324 (ILIL…TNLL), 349–369 (IFLT…AVIM), 395–415 (LFWF…FGFI), 434–454 (IWAI…HMYL), 468–488 (ITIM…LSLV), and 498–518 (FLFS…GMWL). Histidine 401 serves as a coordination point for Cu cation. The segment at residues 401–405 (HPEVY) is a cross-link (1'-histidyl-3'-tyrosine (His-Tyr)). Tyrosine 405 lines the O2 pocket. The Cu cation site is built by histidine 450 and histidine 451. 2 residues coordinate Mg(2+): histidine 528 and aspartate 529. Transmembrane regions (helical) follow at residues 533 to 553 (VVAH…FSGF), 574 to 594 (LIYY…LGFS), and 613 to 633 (MSTA…LMIF). Histidine 536 is a binding site for heme a3. Histidine 538 is a Fe(II)-heme a binding site.

It belongs to the heme-copper respiratory oxidase family. Component of the cytochrome c oxidase (complex IV, CIV), a multisubunit enzyme composed of a catalytic core of 3 subunits and several supernumerary subunits. The complex exists as a monomer or a dimer and forms supercomplexes (SCs) in the inner mitochondrial membrane with ubiquinol-cytochrome c oxidoreductase (cytochrome b-c1 complex, complex III, CIII). It depends on heme as a cofactor. Requires Cu cation as cofactor.

The protein localises to the mitochondrion inner membrane. The catalysed reaction is 4 Fe(II)-[cytochrome c] + O2 + 8 H(+)(in) = 4 Fe(III)-[cytochrome c] + 2 H2O + 4 H(+)(out). The protein operates within energy metabolism; oxidative phosphorylation. In terms of biological role, component of the cytochrome c oxidase, the last enzyme in the mitochondrial electron transport chain which drives oxidative phosphorylation. The respiratory chain contains 3 multisubunit complexes succinate dehydrogenase (complex II, CII), ubiquinol-cytochrome c oxidoreductase (cytochrome b-c1 complex, complex III, CIII) and cytochrome c oxidase (complex IV, CIV), that cooperate to transfer electrons derived from NADH and succinate to molecular oxygen, creating an electrochemical gradient over the inner membrane that drives transmembrane transport and the ATP synthase. Cytochrome c oxidase is the component of the respiratory chain that catalyzes the reduction of oxygen to water. Electrons originating from reduced cytochrome c in the intermembrane space (IMS) are transferred via the dinuclear copper A center (CU(A)) of subunit 2 and heme A of subunit 1 to the active site in subunit 1, a binuclear center (BNC) formed by heme A3 and copper B (CU(B)). The BNC reduces molecular oxygen to 2 water molecules using 4 electrons from cytochrome c in the IMS and 4 protons from the mitochondrial matrix. This is Cytochrome c oxidase subunit 1 (COI) from Tetrahymena pyriformis.